We begin with the raw amino-acid sequence, 292 residues long: Protease HtpX (292 aa).

Helical transmembrane passes span 5-25 (VVLFLLTNFAVLILAGIVMSV) and 35-55 (GLLVMAAIFGFGGSFISLLLS). His-140 contacts Zn(2+). The active site involves Glu-141. His-144 is a Zn(2+) binding site. The next 2 helical transmembrane spans lie at 155–175 (LLQGVLNTFVIVLARVVGGII) and 193–213 (IIVFVLEMVFGLFATMIAMWF). Zn(2+) is bound at residue Glu-218.

It belongs to the peptidase M48B family. Zn(2+) is required as a cofactor.

It is found in the cell inner membrane. The protein is Protease HtpX of Xanthomonas campestris pv. campestris (strain 8004).